The chain runs to 688 residues: Homoaconitase, mitochondrial (688 aa).

A mitochondrion-targeting transit peptide spans 1-19 (MALLYLSTRSSLKKTGARC). [4Fe-4S] cluster-binding residues include C346, C406, and C409.

It belongs to the aconitase/IPM isomerase family. [4Fe-4S] cluster serves as cofactor.

It localises to the mitochondrion. It carries out the reaction (2R,3S)-homoisocitrate = cis-homoaconitate + H2O. It functions in the pathway amino-acid biosynthesis; L-lysine biosynthesis via AAA pathway; L-alpha-aminoadipate from 2-oxoglutarate: step 3/5. Functionally, catalyzes the reversible hydration of cis-homoaconitate to (2R,3S)-homoisocitrate, a step in the alpha-aminoadipate pathway for lysine biosynthesis. This Debaryomyces hansenii (strain ATCC 36239 / CBS 767 / BCRC 21394 / JCM 1990 / NBRC 0083 / IGC 2968) (Yeast) protein is Homoaconitase, mitochondrial (LYS4).